The chain runs to 202 residues: Peptide deformylase 2 (202 aa).

2 residues coordinate Fe cation: Cys-123 and His-165. The active site involves Glu-166. Position 169 (His-169) interacts with Fe cation.

The protein belongs to the polypeptide deformylase family. Fe(2+) is required as a cofactor.

The enzyme catalyses N-terminal N-formyl-L-methionyl-[peptide] + H2O = N-terminal L-methionyl-[peptide] + formate. In terms of biological role, removes the formyl group from the N-terminal Met of newly synthesized proteins. Requires at least a dipeptide for an efficient rate of reaction. N-terminal L-methionine is a prerequisite for activity but the enzyme has broad specificity at other positions. This chain is Peptide deformylase 2, found in Vibrio vulnificus (strain YJ016).